Reading from the N-terminus, the 675-residue chain is UvrABC system protein B (675 aa).

The region spanning 30-417 (SGIEQGNRNQ…SDQIVEQVVR (388 aa)) is the Helicase ATP-binding domain. 43-50 (GVTGSGKT) provides a ligand contact to ATP. The short motif at 96 to 119 (YYDYYQPEAYVPSSDTFIEKDAAI) is the Beta-hairpin element. Residues 434-601 (QVDDVLSEIN…AVRQKVKEID (168 aa)) form the Helicase C-terminal domain. A UVR domain is found at 637-672 (AKHMSKLEKEMLKASKELQFEQAARLRDEILRLKAQ).

Belongs to the UvrB family. As to quaternary structure, forms a heterotetramer with UvrA during the search for lesions. Interacts with UvrC in an incision complex.

It is found in the cytoplasm. Its function is as follows. The UvrABC repair system catalyzes the recognition and processing of DNA lesions. A damage recognition complex composed of 2 UvrA and 2 UvrB subunits scans DNA for abnormalities. Upon binding of the UvrA(2)B(2) complex to a putative damaged site, the DNA wraps around one UvrB monomer. DNA wrap is dependent on ATP binding by UvrB and probably causes local melting of the DNA helix, facilitating insertion of UvrB beta-hairpin between the DNA strands. Then UvrB probes one DNA strand for the presence of a lesion. If a lesion is found the UvrA subunits dissociate and the UvrB-DNA preincision complex is formed. This complex is subsequently bound by UvrC and the second UvrB is released. If no lesion is found, the DNA wraps around the other UvrB subunit that will check the other stand for damage. This is UvrABC system protein B from Acinetobacter baylyi (strain ATCC 33305 / BD413 / ADP1).